Here is a 416-residue protein sequence, read N- to C-terminus: CinA-like protein (416 aa).

Belongs to the CinA family.

The chain is CinA-like protein from Trichormus variabilis (strain ATCC 29413 / PCC 7937) (Anabaena variabilis).